The sequence spans 354 residues: Serine/threonine-protein phosphatase 2A activator 2 (354 aa).

This sequence belongs to the PTPA-type PPIase family.

Its subcellular location is the cytoplasm. The enzyme catalyses [protein]-peptidylproline (omega=180) = [protein]-peptidylproline (omega=0). In terms of biological role, PPIases accelerate the folding of proteins. It catalyzes the cis-trans isomerization of proline imidic peptide bonds in oligopeptides. Acts as a regulatory subunit for PP2A-like phosphatases modulating their activity or substrate specificity, probably by inducing a conformational change in the catalytic subunit, a direct target of the PPIase. Can reactivate inactive phosphatase PP2A-phosphatase methylesterase complexes (PP2Ai) in presence of ATP and Mg(2+) by dissociating the inactive form from the complex. This is Serine/threonine-protein phosphatase 2A activator 2 (RRD2) from Yarrowia lipolytica (strain CLIB 122 / E 150) (Yeast).